Here is a 263-residue protein sequence, read N- to C-terminus: Palmitoyltransferase ZDHHC22 (263 aa).

Residues 1–9 (MLALRLLNV) lie on the Cytoplasmic side of the membrane. The helical transmembrane segment at 10–30 (VAPAYFLCISLVTFVLQLFLF) threads the bilayer. At 31–47 (LPSMREDPTATPLFSPA) the chain is on the lumenal side. The chain crosses the membrane as a helical span at residues 48-68 (VLHGALFLFLSANALGNYILV). Residues 69–125 (VQNSPDDLGACQGTSSQRPQRPPPSTHFCRVCARVTLRHDHHCFFTGNCIGSRNMRN) lie on the Cytoplasmic side of the membrane. One can recognise a DHHC domain in the interval 91–131 (PPSTHFCRVCARVTLRHDHHCFFTGNCIGSRNMRNFILFCL). C111 functions as the S-palmitoyl cysteine intermediate in the catalytic mechanism. 2 helical membrane-spanning segments follow: residues 126–146 (FILF…AGVA) and 147–167 (YISA…TLLP). The Cytoplasmic segment spans residues 168–182 (TSISQFFSGAVLGSD). A helical transmembrane segment spans residues 183 to 203 (MFVILMLYLWFAVGLACAGFC). The Lumenal portion of the chain corresponds to 204 to 263 (CHQLLLILRGQTRYQVRKGVAVRARPWRKNLQEVFGKRWLLGLLVPMFNVGTESSKQQDK).

The protein belongs to the DHHC palmitoyltransferase family. As to quaternary structure, interacts with CNN3.

Its subcellular location is the endoplasmic reticulum membrane. The protein localises to the golgi apparatus membrane. It catalyses the reaction L-cysteinyl-[protein] + hexadecanoyl-CoA = S-hexadecanoyl-L-cysteinyl-[protein] + CoA. Functionally, palmitoyltransferase that could catalyze the addition of palmitate onto various protein substrates and be involved in a variety of cellular processes. Catalyzes the palmitoylation of KCNMA1, regulating localization of KCNMA1 to the plasma membrane. Might also mediate palmitoylation of CNN3. The sequence is that of Palmitoyltransferase ZDHHC22 from Rattus norvegicus (Rat).